A 103-amino-acid polypeptide reads, in one-letter code: Truncated secreted TNF-receptor-like protein A53 (103 aa).

One copy of the TNFR-Cys 1 repeat lies at 36-73 (SCDKGEYLDKRHNQCCNRCPPGEFAKVRCNGNDNTKCE). Disulfide bonds link C37-C50, C51-C64, and C54-C72. The TNFR-Cys 2; truncated repeat unit spans residues 74–103 (RCPPHTYTTIPIILMDVINVENAQQDHLIR).

This sequence belongs to the poxviridae A53R protein family.

This chain is Truncated secreted TNF-receptor-like protein A53, found in Vaccinia virus (strain Copenhagen) (VACV).